The chain runs to 97 residues: Exodeoxyribonuclease 7 small subunit (97 aa).

Residues 1-22 (MAKTASPGATPPGNGTEPLPDN) are disordered.

It belongs to the XseB family. Heterooligomer composed of large and small subunits.

It localises to the cytoplasm. It carries out the reaction Exonucleolytic cleavage in either 5'- to 3'- or 3'- to 5'-direction to yield nucleoside 5'-phosphates.. Functionally, bidirectionally degrades single-stranded DNA into large acid-insoluble oligonucleotides, which are then degraded further into small acid-soluble oligonucleotides. The sequence is that of Exodeoxyribonuclease 7 small subunit from Burkholderia cenocepacia (strain HI2424).